Reading from the N-terminus, the 306-residue chain is Low density lipoprotein receptor adapter protein 1 (306 aa).

N-acetylmethionine is present on methionine 1. Serine 14 is modified (phosphoserine). In terms of domain architecture, PID spans 44-168 (GMVFSLKYLG…VAQAFKVAFE (125 aa)). The interval 178-204 (EKREKANQEGGDVPGTRRDSTPSLKTS) is disordered. Serine 197 and serine 200 each carry phosphoserine. The Clathrin box signature appears at 210-214 (LLDLE). The tract at residues 247-274 (WELDDGLDEAFSRLAQSRTNPQVLDTGL) is AP-2 complex binding. Residues 255-264 (EAFSRLAQSR) carry the [DE]-X(1,2)-F-X-X-[FL]-X-X-X-R motif motif.

Interacts (via PID domain) with LDLR (via NPXY motifs). Binds to soluble clathrin trimers. Interacts with AP2B1; the interaction mediates the association with the AP-2 complex. Interacts with VLDLR. Interacts with LRP2.

It is found in the cytoplasm. Its function is as follows. Adapter protein (clathrin-associated sorting protein (CLASP)) required for efficient endocytosis of the LDL receptor (LDLR) in polarized cells such as hepatocytes and lymphocytes, but not in non-polarized cells (fibroblasts). May be required for LDL binding and internalization but not for receptor clustering in coated pits. May facilitate the endocytosis of LDLR and LDLR-LDL complexes from coated pits by stabilizing the interaction between the receptor and the structural components of the pits. May also be involved in the internalization of other LDLR family members. Binds to phosphoinositides, which regulate clathrin bud assembly at the cell surface. Required for trafficking of LRP2 to the endocytic recycling compartment which is necessary for LRP2 proteolysis, releasing a tail fragment which translocates to the nucleus and mediates transcriptional repression. This is Low density lipoprotein receptor adapter protein 1 from Rattus norvegicus (Rat).